We begin with the raw amino-acid sequence, 347 residues long: Dual specificity mitogen-activated protein kinase kinase mek-1 (347 aa).

Residues 1 to 42 (MERDFDLGMGRPGGLGGLGGEPIMQQMPQPAPHHPSRSSNDH) are disordered. Over residues 10 to 20 (GRPGGLGGLGG) the composition is skewed to gly residues. The Protein kinase domain maps to 72–325 (LQFVEDIGHG…YDMLLQHPFV (254 aa)). ATP contacts are provided by residues 78–86 (IGHGSCGTV) and Lys-99. Residue Asp-193 is the Proton acceptor of the active site. Phosphoserine is present on residues Ser-221 and Ser-225.

This sequence belongs to the protein kinase superfamily. STE Ser/Thr protein kinase family. MAP kinase kinase subfamily. In terms of assembly, interacts with shc-1; the interaction is independent of mek-1 catalytic activity, is constitutive and may facilitate mlk-1-mediated phosphorylation by bringing mlk-1 and mek-1 together. It depends on Mg(2+) as a cofactor. May be phosphorylated at Ser-221 and/or Ser-225 by mlk-1. As to expression, expressed in pharyngeal muscles, uterine endothelial cells, intestine and in neurons of ring ganglia, ventral ganglion and ganglia around anus. Expressed also in hypodermis and body muscles.

It carries out the reaction L-seryl-[protein] + ATP = O-phospho-L-seryl-[protein] + ADP + H(+). The catalysed reaction is L-threonyl-[protein] + ATP = O-phospho-L-threonyl-[protein] + ADP + H(+). The enzyme catalyses L-tyrosyl-[protein] + ATP = O-phospho-L-tyrosyl-[protein] + ADP + H(+). With respect to regulation, may be activated by phosphorylation at Ser-221 and Ser-225. In terms of biological role, dual specificity protein kinase which may phosphorylate kgb-1 and thereby is an essential component of the JNK pathway composed of mlk-1, mek-1 and kgb-1. May also have a synergistic role with sek-1 in phosphorylating pmk-1. Involved in the response to environmental stress including heavy metal ions (Cu(2+) and Cd(2+)), oxidative stress and starvation. In association with sek-1, regulates germline cell apoptosis in response to oxidative, osmotic and heat shock stresses. Involved in resistance to pathogenic bacteria infection. Involved in axon regeneration after injury. The sequence is that of Dual specificity mitogen-activated protein kinase kinase mek-1 from Caenorhabditis elegans.